We begin with the raw amino-acid sequence, 371 residues long: Protein lifeguard 1 (371 aa).

Residues 1–145 (MSHEKSFLVS…EGPPSYYDNQ (145 aa)) are disordered. A compositionally biased stretch (pro residues) spans 14–49 (YPPPNPGYPGGPQPPMPPYAQPPYPGAPYPQPPFQP). Over residues 84-98 (YPQEGYPQGPYPQGG) the composition is skewed to low complexity. Residues 102 to 114 (GPYPQSPFPPNPY) show a composition bias toward pro residues. A run of 7 helical transmembrane segments spans residues 165–185 (VFLVLTLQLSVTLSTVSVFTF), 197–217 (VWTYYVSYAVFFISLIVLSCC), 228–248 (LVALSVLTASLSYMVGMIASF), 253–273 (AVIMAVGITTAVCFTVVIFSM), 283–303 (MGVLLVSMVVLFIFAILCIFI), 307–327 (ILEIVYASLGALLFTCFLAVD), and 346–366 (FAALNLYTDIINIFLYILTII).

This sequence belongs to the BI1 family. LFG subfamily.

It is found in the membrane. In terms of biological role, potential apoptotic regulator. This is Protein lifeguard 1 (GRINA) from Homo sapiens (Human).